The primary structure comprises 70 residues: Translational regulator CsrA (70 aa).

The protein belongs to the CsrA/RsmA family. Homodimer; the beta-strands of each monomer intercalate to form a hydrophobic core, while the alpha-helices form wings that extend away from the core.

The protein localises to the cytoplasm. Its function is as follows. A translational regulator that binds mRNA to regulate translation initiation and/or mRNA stability. Usually binds in the 5'-UTR at or near the Shine-Dalgarno sequence preventing ribosome-binding, thus repressing translation. Its main target seems to be the major flagellin gene, while its function is anatagonized by FliW. The polypeptide is Translational regulator CsrA (Rhodopirellula baltica (strain DSM 10527 / NCIMB 13988 / SH1)).